The sequence spans 500 residues: L-arabinose isomerase (500 aa).

Positions 306, 333, 350, and 450 each coordinate Mn(2+).

The protein belongs to the arabinose isomerase family. As to quaternary structure, homohexamer. Mn(2+) serves as cofactor.

The catalysed reaction is beta-L-arabinopyranose = L-ribulose. Its pathway is carbohydrate degradation; L-arabinose degradation via L-ribulose; D-xylulose 5-phosphate from L-arabinose (bacterial route): step 1/3. Its function is as follows. Catalyzes the conversion of L-arabinose to L-ribulose. This chain is L-arabinose isomerase, found in Salmonella paratyphi A (strain ATCC 9150 / SARB42).